Consider the following 318-residue polypeptide: Methionyl-tRNA formyltransferase (318 aa).

Ser-112–Pro-115 is a binding site for (6S)-5,6,7,8-tetrahydrofolate.

Belongs to the Fmt family.

It carries out the reaction L-methionyl-tRNA(fMet) + (6R)-10-formyltetrahydrofolate = N-formyl-L-methionyl-tRNA(fMet) + (6S)-5,6,7,8-tetrahydrofolate + H(+). Its function is as follows. Attaches a formyl group to the free amino group of methionyl-tRNA(fMet). The formyl group appears to play a dual role in the initiator identity of N-formylmethionyl-tRNA by promoting its recognition by IF2 and preventing the misappropriation of this tRNA by the elongation apparatus. This is Methionyl-tRNA formyltransferase from Shewanella sp. (strain MR-7).